The chain runs to 166 residues: Ribonuclease H (166 aa).

The RNase H type-1 domain occupies 10–151 (KRVRVDMFTD…ADELARRGTS (142 aa)). Positions 19, 57, 79, and 143 each coordinate Mg(2+). Basic and acidic residues predominate over residues 145–157 (LARRGTSEARQGK). The disordered stretch occupies residues 145 to 166 (LARRGTSEARQGKVDGQSSTIL).

Belongs to the RNase H family. Monomer. The cofactor is Mg(2+).

It localises to the cytoplasm. The enzyme catalyses Endonucleolytic cleavage to 5'-phosphomonoester.. Functionally, endonuclease that specifically degrades the RNA of RNA-DNA hybrids. The chain is Ribonuclease H from Rhodospirillum rubrum (strain ATCC 11170 / ATH 1.1.1 / DSM 467 / LMG 4362 / NCIMB 8255 / S1).